We begin with the raw amino-acid sequence, 376 residues long: uncharacterized protein (376 aa).

A helical membrane pass occupies residues 19-39; that stretch reads FVLISLILLLNLGLLLGIQIY.

This sequence to S.pombe SpAC5H10.12c.

It localises to the cytoplasm. Its subcellular location is the nucleus. The protein resides in the membrane. This is an uncharacterized protein from Schizosaccharomyces pombe (strain 972 / ATCC 24843) (Fission yeast).